The sequence spans 79 residues: RNA-binding protein Hfq (79 aa).

In terms of domain architecture, Sm spans Asp10–Val70.

The protein belongs to the Hfq family. As to quaternary structure, homohexamer.

Functionally, RNA chaperone that binds small regulatory RNA (sRNAs) and mRNAs to facilitate mRNA translational regulation in response to envelope stress, environmental stress and changes in metabolite concentrations. Also binds with high specificity to tRNAs. The polypeptide is RNA-binding protein Hfq (Bartonella quintana (strain Toulouse) (Rochalimaea quintana)).